We begin with the raw amino-acid sequence, 263 residues long: Putative hydro-lyase BPUM_0381 (263 aa).

This sequence belongs to the D-glutamate cyclase family.

The polypeptide is Putative hydro-lyase BPUM_0381 (Bacillus pumilus (strain SAFR-032)).